We begin with the raw amino-acid sequence, 293 residues long: 3-methyl-2-oxobutanoate hydroxymethyltransferase (293 aa).

A disordered region spans residues 1-29; sequence MTAAHDRSENQPGRPGGETTAPYGSAPRR. Residues Asp-73 and Asp-112 each contribute to the Mg(2+) site. 3-methyl-2-oxobutanoate contacts are provided by residues 73-74, Asp-112, and Lys-142; that span reads DS. A Mg(2+)-binding site is contributed by Glu-144. Glu-210 acts as the Proton acceptor in catalysis.

This sequence belongs to the PanB family. Homodecamer; pentamer of dimers. Mg(2+) serves as cofactor.

The protein localises to the cytoplasm. The catalysed reaction is 3-methyl-2-oxobutanoate + (6R)-5,10-methylene-5,6,7,8-tetrahydrofolate + H2O = 2-dehydropantoate + (6S)-5,6,7,8-tetrahydrofolate. It participates in cofactor biosynthesis; (R)-pantothenate biosynthesis; (R)-pantoate from 3-methyl-2-oxobutanoate: step 1/2. In terms of biological role, catalyzes the reversible reaction in which hydroxymethyl group from 5,10-methylenetetrahydrofolate is transferred onto alpha-ketoisovalerate to form ketopantoate. This chain is 3-methyl-2-oxobutanoate hydroxymethyltransferase, found in Saccharopolyspora erythraea (strain ATCC 11635 / DSM 40517 / JCM 4748 / NBRC 13426 / NCIMB 8594 / NRRL 2338).